Reading from the N-terminus, the 449-residue chain is Mycosin-1 (449 aa).

Residues 1–23 (MQRVAVMVLAVLLALFSAPPAWA) form the signal peptide. An intrachain disulfide couples Cys-51 to Cys-120. Residues 66–389 (PWANDYLRIQ…AGVIDPVAAL (324 aa)) form the Peptidase S8 domain. Active-site charge relay system residues include Asp-92 and His-123. Disordered stretches follow at residues 160 to 179 (FQPKGARQDPNDPNTTQTAG) and 240 to 259 (TGQDCSQNPPPDPSVPSDPR). The span at 170-179 (NDPNTTQTAG) shows a compositional bias: polar residues. Cys-206 and Cys-244 form a disulfide bridge. Ser-334 (charge relay system) is an active-site residue. Residues 421-441 (ITAVVIAGATLAFALGIGALA) form a helical membrane-spanning segment.

The protein belongs to the peptidase S8 family.

Its subcellular location is the cell membrane. May play a dual role in regulation of ESX-1 secretion and virulence. Acts as a protease that cleaves EspB. The chain is Mycosin-1 from Mycolicibacterium smegmatis (strain ATCC 700084 / mc(2)155) (Mycobacterium smegmatis).